We begin with the raw amino-acid sequence, 332 residues long: Glycerol-3-phosphate dehydrogenase [NAD(P)+] (332 aa).

NADPH-binding residues include tryptophan 11, arginine 30, and lysine 108. Positions 108, 137, and 139 each coordinate sn-glycerol 3-phosphate. An NADPH-binding site is contributed by alanine 141. Residues lysine 192, aspartate 245, serine 255, arginine 256, and asparagine 257 each contribute to the sn-glycerol 3-phosphate site. Lysine 192 serves as the catalytic Proton acceptor. Arginine 256 contacts NADPH. NADPH is bound by residues valine 280 and glutamate 282.

The protein belongs to the NAD-dependent glycerol-3-phosphate dehydrogenase family.

It localises to the cytoplasm. It catalyses the reaction sn-glycerol 3-phosphate + NAD(+) = dihydroxyacetone phosphate + NADH + H(+). The enzyme catalyses sn-glycerol 3-phosphate + NADP(+) = dihydroxyacetone phosphate + NADPH + H(+). The protein operates within membrane lipid metabolism; glycerophospholipid metabolism. In terms of biological role, catalyzes the reduction of the glycolytic intermediate dihydroxyacetone phosphate (DHAP) to sn-glycerol 3-phosphate (G3P), the key precursor for phospholipid synthesis. This chain is Glycerol-3-phosphate dehydrogenase [NAD(P)+], found in Burkholderia thailandensis (strain ATCC 700388 / DSM 13276 / CCUG 48851 / CIP 106301 / E264).